Here is a 1358-residue protein sequence, read N- to C-terminus: Mediator of RNA polymerase II transcription subunit 12 (1358 aa).

Belongs to the Mediator complex subunit 12 family. As to quaternary structure, component of the SRB8-11 complex, which itself associates with the Mediator complex.

The protein localises to the nucleus. Its function is as follows. Component of the SRB8-11 complex. The SRB8-11 complex is a regulatory module of the Mediator complex which is itself involved in regulation of basal and activated RNA polymerase II-dependent transcription. The SRB8-11 complex may be involved in the transcriptional repression of a subset of genes regulated by Mediator. It may inhibit the association of the Mediator complex with RNA polymerase II to form the holoenzyme complex. The chain is Mediator of RNA polymerase II transcription subunit 12 (SRB8) from Candida glabrata (strain ATCC 2001 / BCRC 20586 / JCM 3761 / NBRC 0622 / NRRL Y-65 / CBS 138) (Yeast).